A 127-amino-acid chain; its full sequence is Holo-[acyl-carrier-protein] synthase (127 aa).

Positions 8 and 56 each coordinate Mg(2+).

The protein belongs to the P-Pant transferase superfamily. AcpS family. It depends on Mg(2+) as a cofactor.

It is found in the cytoplasm. The enzyme catalyses apo-[ACP] + CoA = holo-[ACP] + adenosine 3',5'-bisphosphate + H(+). Functionally, transfers the 4'-phosphopantetheine moiety from coenzyme A to a Ser of acyl-carrier-protein. In Caldanaerobacter subterraneus subsp. tengcongensis (strain DSM 15242 / JCM 11007 / NBRC 100824 / MB4) (Thermoanaerobacter tengcongensis), this protein is Holo-[acyl-carrier-protein] synthase.